Here is a 72-residue protein sequence, read N- to C-terminus: Large ribosomal subunit protein bL31 (72 aa).

Positions 16, 18, 36, and 39 each coordinate Zn(2+).

The protein belongs to the bacterial ribosomal protein bL31 family. Type A subfamily. Part of the 50S ribosomal subunit. Requires Zn(2+) as cofactor.

Its function is as follows. Binds the 23S rRNA. The polypeptide is Large ribosomal subunit protein bL31 (Geobacter sp. (strain M21)).